The primary structure comprises 498 residues: Ribose import ATP-binding protein RbsA 1 (498 aa).

2 consecutive ABC transporter domains span residues 7–243 (LHIQ…VGRR) and 254–496 (PRGE…IGKS). An ATP-binding site is contributed by 39-46 (GENGAGKS).

Belongs to the ABC transporter superfamily. Ribose importer (TC 3.A.1.2.1) family. In terms of assembly, the complex is composed of an ATP-binding protein (RbsA), two transmembrane proteins (RbsC) and a solute-binding protein (RbsB).

The protein resides in the cell inner membrane. It catalyses the reaction D-ribose(out) + ATP + H2O = D-ribose(in) + ADP + phosphate + H(+). Functionally, part of the ABC transporter complex RbsABC involved in ribose import. Responsible for energy coupling to the transport system. This Pasteurella multocida (strain Pm70) protein is Ribose import ATP-binding protein RbsA 1.